We begin with the raw amino-acid sequence, 341 residues long: L-threonine 3-dehydrogenase (341 aa).

Residue Cys-38 coordinates Zn(2+). Residues Thr-40 and His-43 each act as charge relay system in the active site. 6 residues coordinate Zn(2+): His-63, Glu-64, Cys-93, Cys-96, Cys-99, and Cys-107. NAD(+) is bound by residues Ile-175, Asp-195, Arg-200, Leu-262–Ile-264, and Ile-286–Tyr-287.

The protein belongs to the zinc-containing alcohol dehydrogenase family. Homotetramer. Requires Zn(2+) as cofactor.

It is found in the cytoplasm. It catalyses the reaction L-threonine + NAD(+) = (2S)-2-amino-3-oxobutanoate + NADH + H(+). Its pathway is amino-acid degradation; L-threonine degradation via oxydo-reductase pathway; glycine from L-threonine: step 1/2. In terms of biological role, catalyzes the NAD(+)-dependent oxidation of L-threonine to 2-amino-3-ketobutyrate. This chain is L-threonine 3-dehydrogenase, found in Yersinia pseudotuberculosis serotype O:1b (strain IP 31758).